The chain runs to 862 residues: Cytosolic carboxypeptidase 2 (862 aa).

In terms of domain architecture, Peptidase M14 spans Tyr359–Cys629. The Zn(2+) site is built by His425, Glu428, and His521. Glu593 functions as the Proton donor/acceptor in the catalytic mechanism. Disordered stretches follow at residues Ser669–Pro692, Asn704–Gln728, and Ser750–Ser836. Residues Ser674–Asp689 show a composition bias toward low complexity. The segment covering Asn711–Lys721 has biased composition (basic residues). The segment covering Ala813–Leu825 has biased composition (polar residues).

It belongs to the peptidase M14 family. Interacts with RARRES1, KIF11 and MAPRE1. Requires Zn(2+) as cofactor. As to expression, widely expressed. Expressed in tissues with motile cilia such as testis, lung and trachea. Also detected in brain, eye, muscle, pancreas, intestine, stomach, pituitary, spleen, adrenal and kidney. Expressed in mitral and granular cells in brain.

The protein localises to the cytoplasm. It is found in the cytosol. The protein resides in the cytoskeleton. It localises to the microtubule organizing center. Its subcellular location is the centrosome. The protein localises to the centriole. It is found in the cilium basal body. It catalyses the reaction (L-glutamyl)(n+1)-gamma-L-glutamyl-L-glutamyl-[protein] + H2O = (L-glutamyl)(n)-gamma-L-glutamyl-L-glutamyl-[protein] + L-glutamate. Its activity is regulated as follows. Inhibited by RARRES1. Functionally, metallocarboxypeptidase that mediates deglutamylation of tubulin and non-tubulin target proteins. Catalyzes the removal of polyglutamate side chains present on the gamma-carboxyl group of glutamate residues within the C-terminal tail of tubulin protein. Specifically cleaves tubulin long-side-chains, while it is not able to remove the branching point glutamate. Also catalyzes the removal of polyglutamate residues from the carboxy-terminus of non-tubulin proteins such as MYLK. The polypeptide is Cytosolic carboxypeptidase 2 (Mus musculus (Mouse)).